Reading from the N-terminus, the 280-residue chain is Urease accessory protein UreD (280 aa).

It belongs to the UreD family. In terms of assembly, ureD, UreF and UreG form a complex that acts as a GTP-hydrolysis-dependent molecular chaperone, activating the urease apoprotein by helping to assemble the nickel containing metallocenter of UreC. The UreE protein probably delivers the nickel.

It localises to the cytoplasm. Its function is as follows. Required for maturation of urease via the functional incorporation of the urease nickel metallocenter. The chain is Urease accessory protein UreD from Vibrio parahaemolyticus.